The sequence spans 510 residues: MMKGNKILYILGTGIFVGSSCLFSSLFVAAEEQVYSESEVSTVLSKLEKEAISEAAAEQYTVVDRKEDAWGMKHLKLEKQTEGVTVDSDNVIIHLDRNGAVTSVTGNPVDQVVKIQSVDAIGEEGVKKIIASDNPETKDLVFLAIDKRVNNEGQLFYKVRVTSSPTGDPVSLVYKVNATDGTIMEKQDLTEHVGSEVTLKNSFQVAFNVPVEKSNTGIALHGTDNTGVYHAVVDGKNNYSIIQAPSLVALNQNAVDAYTHGKFVKTYYEDHFQRHSIDDRGMPILSVVDEQHPDAYDNAFWDGKAMRYGETSTPTGKTYASSLDVVGHEMTHGVTEHTAGLEYLGQSGALNESYSDLMGYIISGASNPEIGADTQSVDRKTGIRNLQTPSKHGQPETMAQYDDRARYKGTPYYDQGGVHYNSGIINRIGYTIIQNLGIEKAQTIFYSSLVNYLTPKAQFSDARDAMLAAAKVQYGDEAASVVSAAFNSAGIGAKEDIQVNQPSESVLVNE.

The signal sequence occupies residues 1–30; that stretch reads MMKGNKILYILGTGIFVGSSCLFSSLFVAA. Positions 31-192 are excised as a propeptide; it reads EEQVYSESEV…IMEKQDLTEH (162 aa). Residue Asp-324 participates in Ca(2+) binding. His-328 contributes to the Zn(2+) binding site. The active site involves Glu-329. Zn(2+) contacts are provided by His-332 and Glu-352. Ser-376 is a Ca(2+) binding site. His-419 (proton donor) is an active-site residue.

This sequence belongs to the peptidase M4 family.

The protein resides in the secreted. The catalysed reaction is Preferential cleavage: Xaa-|-Leu, Xaa-|-Phe, Xaa-|-Tyr, Xaa-|-Ala.. Inhibited by L-leucine hydroxamate and phosphoramidon. Not inhibited by phenylmethanesulfonyl fluoride. Reversibly inactivated by straight-chain aliphatic alcohols. Its function is as follows. Metalloprotease capable of the hydrolysis of insoluble hydrophobic substrates. Hydrolyzes azocoll and gelatin and, at a lower rate, soluble and insoluble collagens. Does not cleave short synthetic peptides. Preferentially hydrolyzes the 24-Phe-|-Phe-25 bond in the insulin B-chain, followed by the 5-His-|-Leu-6 bond. Inactivates endothelin-1, primarily by cleavage of the 5-Ser-|-Leu-6 and 16-His-|-Leu-17 bonds. Hydrolyzes the alpha chain of C3 to generate a C3b-like protein. Inhibits complement-mediated hemolysis and opsinization of bacteria. Hydrolyzes the insect antimicrobial peptide cecropin. Decreases the length of E.faecalis chains via the activation of autolysin. Degrades polymerized fibrin. This Enterococcus faecalis (strain ATCC 700802 / V583) protein is Gelatinase.